The sequence spans 330 residues: Inorganic pyrophosphatase 2, mitochondrial (330 aa).

Residues 1–27 constitute a mitochondrion transit peptide; it reads MRALLPLLSVGRGWRVGAAARPPRRVM. Mg(2+) contacts are provided by D159, D164, and D196. Residue K211 is modified to N6-succinyllysine. Position 219 is an N6-acetyllysine (K219). N6-succinyllysine is present on K254. An N6-acetyllysine modification is found at K256.

This sequence belongs to the PPase family. Homodimer. Mg(2+) is required as a cofactor.

The protein resides in the mitochondrion. The enzyme catalyses diphosphate + H2O = 2 phosphate + H(+). Its function is as follows. Hydrolyzes inorganic pyrophosphate. This activity is essential for correct regulation of mitochondrial membrane potential, and mitochondrial organization and function. The polypeptide is Inorganic pyrophosphatase 2, mitochondrial (Ppa2) (Mus musculus (Mouse)).